We begin with the raw amino-acid sequence, 682 residues long: DNA-directed RNA polymerase subunit beta' (682 aa).

Positions 69, 71, 87, and 90 each coordinate Zn(2+). Mg(2+)-binding residues include D489, D491, and D493.

The protein belongs to the RNA polymerase beta' chain family. RpoC1 subfamily. In terms of assembly, in plastids the minimal PEP RNA polymerase catalytic core is composed of four subunits: alpha, beta, beta', and beta''. When a (nuclear-encoded) sigma factor is associated with the core the holoenzyme is formed, which can initiate transcription. Mg(2+) serves as cofactor. The cofactor is Zn(2+).

It localises to the plastid. The protein resides in the chloroplast. The enzyme catalyses RNA(n) + a ribonucleoside 5'-triphosphate = RNA(n+1) + diphosphate. Functionally, DNA-dependent RNA polymerase catalyzes the transcription of DNA into RNA using the four ribonucleoside triphosphates as substrates. The protein is DNA-directed RNA polymerase subunit beta' of Agrostis stolonifera (Creeping bentgrass).